The sequence spans 382 residues: Na(+)/H(+) antiporter NhaA 2 (382 aa).

The next 11 membrane-spanning stretches (helical) occupy residues 7–27 (MVLSETFPGILLIFFTFLALL), 58–78 (LDLWINDGLIAIFFLCIGLEL), 94–114 (SLPIFGALGGMITPALIFIAI), 124–144 (GWAIPTATDIAFAVGILMLLG), 153–173 (LFLLSLAIFDDLGAIVIIALF), 178–198 (LSALAIIICLFCIFALLLLNY), 199–219 (YHITHLSLYVLVGVVLWIAML), 255–275 (NPWVVYFILPLFAFANAGIDI), 291–311 (IILGLFLGKQLGVFTFCFIAI), 327–347 (FYGICILTGIGFTMSLFIDGL), and 361–381 (LAILVASFLSAIVGFIYLKIV).

The protein belongs to the NhaA Na(+)/H(+) (TC 2.A.33) antiporter family.

The protein resides in the cell inner membrane. The catalysed reaction is Na(+)(in) + 2 H(+)(out) = Na(+)(out) + 2 H(+)(in). Its function is as follows. Na(+)/H(+) antiporter that extrudes sodium in exchange for external protons. This Campylobacter jejuni (strain RM1221) protein is Na(+)/H(+) antiporter NhaA 2.